The sequence spans 447 residues: Chaperone protein dnaJ A7B, chloroplastic (447 aa).

Residues 1-86 constitute a chloroplast transit peptide; it reads MALLQFGGTL…HRRSSRFIVR (86 aa). The 65-residue stretch at 90-154 folds into the J domain; that stretch reads DFYSTLGVSR…EKRSIYDKYG (65 aa). The CR-type zinc-finger motif lies at 217 to 298; that stretch reads GVEKEIEITR…CGGDGRVRKT (82 aa). Zn(2+) contacts are provided by Cys230, Cys233, Cys247, Cys250, Cys273, Cys276, Cys286, and Cys289. CXXCXGXG motif repeat units follow at residues 230-237, 247-254, 273-280, and 286-293; these read CNTCDGTG, CKTCGGQG, CNTCGGTG, and CNTCGGDG.

This sequence belongs to the DnaJ family. In terms of assembly, interacts with PCNA. In terms of tissue distribution, expressed in roots, stems, leaves and panicles.

Its subcellular location is the plastid. It localises to the chloroplast. Its function is as follows. Plays pivotal roles in chloroplast development. Is essential for the regulation of chloroplast development and differentiation. This Oryza sativa subsp. japonica (Rice) protein is Chaperone protein dnaJ A7B, chloroplastic.